The chain runs to 695 residues: MDLHSLLELGTKPTAPHVRNKKVILFDTNHQVSICNQIIDAINSGIDLGDLLEGGLLTLCVEHYYNSDKDKFNTSPIAKYLRDAGYEFDVVKNADATRFLDVIPNEPHYSPLILALKTLESTESQRGRIGLFLSFCSLFLPKLVVGDRASIEKALRQVTVHQEQGIVTYPNHWLTTGHMKVIFGILRSSFILKFVLIHQGVNLVTGHDAYDSIISNSVGQTRFSGLLIVKTVLEFILQKTDSGVTLHPLVRTSKVKNEVASFKQALSNLARHGEYAPFARVLNLSGINNLEHGLYPQLSAIALGVATAHGSTLAGVNVGEQYQQLREAAHDAEIKLQRRHEHQEIQAIAEDDEERKILEQFHLQKTEITHSQTLAVLSQKREKLARLAAEIENNIVEDQGFKQSQNQVSQSFLNDPTPVEVTVQARPINRPTALPPPVDNKIEHESTEDSSSSSSFVDLNDPFALLNEDEDTLDDSVMIPSTTSREFQGIPAPPRQSQDLNNSQGKQEDESTNPIKKQFLRYQELPPVQEDDESEYTTDSQESIDQPGSDNEQGVDLPPPPLYAQEKRQDPIQHPAVSSQDPFGSIGDVNGDILEPIRSPSSPSAPQEDTRAREAYELSPDFTNYEDNQQNWPQRVVTKKGRTFLYPNDLLQTNPPESLITALVEEYQNPVSAKELQADWPDMSFDERRHVAMNL.

Coiled-coil stretches lie at residues 316-341 and 372-399; these read VNVG…RRHE and QTLA…VEDQ. Disordered stretches follow at residues 423–458, 483–515, and 527–612; these read VQAR…SFVD, TSRE…TNPI, and PVQE…DTRA. 2 stretches are compositionally biased toward polar residues: residues 495 to 505 and 537 to 552; these read RQSQDLNNSQG and TTDS…SDNE. A PTAP/PSAP motif motif is present at residues 603 to 606; that stretch reads PSAP.

Belongs to the filoviruses nucleoprotein family. Homooligomer. Homomultimerizes to form the nucleocapsid. Binds to viral genomic RNA. Interacts with VP35 and VP30 to form the nucleocapsid. Also interacts with VP24 and VP40. In terms of processing, phosphorylated.

The protein resides in the virion. Its subcellular location is the host cytoplasm. Its function is as follows. Encapsidates the genome, protecting it from nucleases. The encapsidated genomic RNA is termed the nucleocapsid and serves as template for transcription and replication. During replication, encapsidation by NP is coupled to RNA synthesis and all replicative products are resistant to nucleases. This Chlorocebus aethiops (Green monkey) protein is Nucleoprotein (NP).